We begin with the raw amino-acid sequence, 143 residues long: Peptide methionine sulfoxide reductase MsrB (143 aa).

Residues 16-139 (DAELRRRLTP…NSAALNFEAK (124 aa)) enclose the MsrB domain. 4 residues coordinate Zn(2+): cysteine 55, cysteine 58, cysteine 104, and cysteine 107. Cysteine 128 acts as the Nucleophile in catalysis.

The protein belongs to the MsrB Met sulfoxide reductase family. It depends on Zn(2+) as a cofactor.

It carries out the reaction L-methionyl-[protein] + [thioredoxin]-disulfide + H2O = L-methionyl-(R)-S-oxide-[protein] + [thioredoxin]-dithiol. In Burkholderia thailandensis (strain ATCC 700388 / DSM 13276 / CCUG 48851 / CIP 106301 / E264), this protein is Peptide methionine sulfoxide reductase MsrB.